The following is a 375-amino-acid chain: ATVGKTIRCRAAVAWEAGKPLSMEEVEVAPPQAGEVRIKIVATGICHTDAYTLSGSDPEGVFPSVLGHEGAGIVESVGEGVTKFKSGDAVIPLYVPQCGECKFCKNPKTNLCQKIRLTQGKGLMPNGTSRFSCNGQVLFHFMGSSTFSEYTVVAEISLAKVHEKAPLDKVCLLGCAISTGYGAALNTAKVEAGSTCAVFGLGALGLAVIMGCQAAGASRIIAIDVNPDKFRIAKEFGATDLVNPKDHSKPVEQVLVEMTDGGVDYSFECVGNIAVMRAALEACHKGWGTSVIIGVAAAGQEISTRPFQLVTGRTWKGTAFGGYKSVESVPKLVEEYMNKKVKVDEFVTHTLPFEKIHEGFDLMGAGKSIRTVLNY.

N-acetylalanine is present on alanine 1. Residues cysteine 46, histidine 68, cysteine 98, cysteine 101, cysteine 104, cysteine 112, and cysteine 175 each contribute to the Zn(2+) site.

The protein belongs to the zinc-containing alcohol dehydrogenase family. Class-III subfamily. As to quaternary structure, homodimer or heterodimer with H chain. Requires Zn(2+) as cofactor.

The protein localises to the cytoplasm. It catalyses the reaction a primary alcohol + NAD(+) = an aldehyde + NADH + H(+). It carries out the reaction a secondary alcohol + NAD(+) = a ketone + NADH + H(+). The enzyme catalyses S-(hydroxymethyl)glutathione + NADP(+) = S-formylglutathione + NADPH + H(+). The catalysed reaction is S-(hydroxymethyl)glutathione + NAD(+) = S-formylglutathione + NADH + H(+). Functionally, class-III ADH is remarkably ineffective in oxidizing ethanol, but it readily catalyzes the oxidation of long-chain primary alcohols and the oxidation of S-(hydroxymethyl) glutathione. This chain is Alcohol dehydrogenase class-3 chain L, found in Gadus morhua (Atlantic cod).